Consider the following 464-residue polypeptide: Fumarate hydratase class II (464 aa).

Residues 98 to 100 (SGT), 129 to 132 (HPND), 139 to 141 (SSN), and T187 each bind substrate. Catalysis depends on H188, which acts as the Proton donor/acceptor. S318 is an active-site residue. Substrate contacts are provided by residues S319 and 324–326 (KVN).

Belongs to the class-II fumarase/aspartase family. Fumarase subfamily. Homotetramer.

It is found in the cytoplasm. The catalysed reaction is (S)-malate = fumarate + H2O. It functions in the pathway carbohydrate metabolism; tricarboxylic acid cycle; (S)-malate from fumarate: step 1/1. Involved in the TCA cycle. Catalyzes the stereospecific interconversion of fumarate to L-malate. The polypeptide is Fumarate hydratase class II (Wigglesworthia glossinidia brevipalpis).